We begin with the raw amino-acid sequence, 690 residues long: Calpain-9 (690 aa).

The interval 1–24 is disordered; the sequence is MPYLYRAPGPQAHPVPKDARITHS. The region spanning 42–337 is the Calpain catalytic domain; sequence LFEDADFPAS…FDKVEICNLT (296 aa). L81, G83, and D88 together coordinate Ca(2+). Residue C97 is part of the active site. E167 is a Ca(2+) binding site. Catalysis depends on residues H254 and N278. Residues E284, D291, L312, D314, and E316 each coordinate Ca(2+). The tract at residues 338-521 is domain III; sequence PDALEEDAIH…PPDQETEEEQ (184 aa). The tract at residues 498 to 519 is disordered; sequence GNVDIDLPEPPKPTPPDQETEE. 3 consecutive EF-hand domains span residues 518–552, 561–589, and 591–626; these read EEEQRFRALFEQVAGEDMEVTAEELEYVLNAVLQK, LSLISCKNIISLMDTSGNGKLEFDEFKVF, and DKLKQWINLFLRFDADKSGTMSTYELRTALKAAGFQ. Residues 522–690 are domain IV; the sequence is RFRALFEQVA…NEFIHLTMNI (169 aa). Ca(2+)-binding residues include D574, S576, N578, K580, E585, D604, D606, S608, T610, and E615.

The protein belongs to the peptidase C2 family. Expressed predominantly in stomach.

Functionally, calcium-regulated non-lysosomal thiol-protease. The sequence is that of Calpain-9 (CAPN9) from Homo sapiens (Human).